A 171-amino-acid polypeptide reads, in one-letter code: Squamosa promoter-binding protein 2 (171 aa).

2 disordered regions span residues 20–46 and 57–76; these read GDEG…VVKV and KLNL…TASG. Residues 22-40 show a composition bias toward acidic residues; sequence EGSDFEEEEEGEDEEEEEQ. The SBP-type zinc finger occupies 82–159; the sequence is QPCCLVENCG…AGHNERRRKS (78 aa). Zn(2+)-binding residues include C85, C90, C107, H110, C126, C129, H133, and C145. The short motif at 142–158 is the Bipartite nuclear localization signal element; that stretch reads KRSCRRRLAGHNERRRK. Positions 149 to 158 are enriched in basic residues; the sequence is LAGHNERRRK. The segment at 149 to 171 is disordered; sequence LAGHNERRRKSSLESHKEGRSPR. Residues 159-171 are compositionally biased toward basic and acidic residues; sequence SSLESHKEGRSPR.

Its subcellular location is the nucleus. Probable transcriptional factor. Binds to the promoter of the SQUAMOSA gene. The protein is Squamosa promoter-binding protein 2 (SBP2) of Antirrhinum majus (Garden snapdragon).